Reading from the N-terminus, the 545-residue chain is CTP synthase (545 aa).

Residues 1 to 267 (MTKFIFVTGG…AEQTLKLLQM (267 aa)) are amidoligase domain. S13 contacts CTP. S13 lines the UTP pocket. Residues 14–19 (SIGKGI) and D71 contribute to the ATP site. Positions 71 and 141 each coordinate Mg(2+). Residues 148 to 150 (DIE), 188 to 193 (KTKPTQ), and K224 contribute to the CTP site. UTP-binding positions include 188 to 193 (KTKPTQ) and K224. The region spanning 292–534 (EIAIVGKYVS…VQAAIAQSHP (243 aa)) is the Glutamine amidotransferase type-1 domain. G354 serves as a coordination point for L-glutamine. C381 acts as the Nucleophile; for glutamine hydrolysis in catalysis. L-glutamine contacts are provided by residues 382–385 (LGMQ), E405, and R462. Active-site residues include H507 and E509.

This sequence belongs to the CTP synthase family. In terms of assembly, homotetramer.

It catalyses the reaction UTP + L-glutamine + ATP + H2O = CTP + L-glutamate + ADP + phosphate + 2 H(+). The enzyme catalyses L-glutamine + H2O = L-glutamate + NH4(+). The catalysed reaction is UTP + NH4(+) + ATP = CTP + ADP + phosphate + 2 H(+). It participates in pyrimidine metabolism; CTP biosynthesis via de novo pathway; CTP from UDP: step 2/2. Its activity is regulated as follows. Allosterically activated by GTP, when glutamine is the substrate; GTP has no effect on the reaction when ammonia is the substrate. The allosteric effector GTP functions by stabilizing the protein conformation that binds the tetrahedral intermediate(s) formed during glutamine hydrolysis. Inhibited by the product CTP, via allosteric rather than competitive inhibition. Functionally, catalyzes the ATP-dependent amination of UTP to CTP with either L-glutamine or ammonia as the source of nitrogen. Regulates intracellular CTP levels through interactions with the four ribonucleotide triphosphates. The polypeptide is CTP synthase (Trichormus variabilis (strain ATCC 29413 / PCC 7937) (Anabaena variabilis)).